Consider the following 499-residue polypeptide: Probable cytosol aminopeptidase (499 aa).

Residues lysine 267 and aspartate 272 each coordinate Mn(2+). Residue lysine 279 is part of the active site. Residues aspartate 290, aspartate 349, and glutamate 351 each coordinate Mn(2+). Arginine 353 is a catalytic residue.

Belongs to the peptidase M17 family. Requires Mn(2+) as cofactor.

It localises to the cytoplasm. The enzyme catalyses Release of an N-terminal amino acid, Xaa-|-Yaa-, in which Xaa is preferably Leu, but may be other amino acids including Pro although not Arg or Lys, and Yaa may be Pro. Amino acid amides and methyl esters are also readily hydrolyzed, but rates on arylamides are exceedingly low.. It carries out the reaction Release of an N-terminal amino acid, preferentially leucine, but not glutamic or aspartic acids.. Presumably involved in the processing and regular turnover of intracellular proteins. Catalyzes the removal of unsubstituted N-terminal amino acids from various peptides. In Buchnera aphidicola subsp. Acyrthosiphon pisum (strain 5A), this protein is Probable cytosol aminopeptidase.